The sequence spans 433 residues: FAD-dependent monooxygenase notI (433 aa).

Residues Glu-45 and Arg-117 each coordinate FAD. Residue Arg-195 is part of the active site. Positions 314 and 327 each coordinate FAD.

It belongs to the paxM FAD-dependent monooxygenase family. FAD serves as cofactor.

The protein operates within alkaloid biosynthesis. FAD-dependent monooxygenase; part of the gene cluster that mediates the biosynthesis of notoamide, a fungal indole alkaloid that belongs to a family of natural products containing a characteristic bicyclo[2.2.2]diazaoctane core. The first step of notoamide biosynthesis involves coupling of L-proline and L-tryptophan by the bimodular NRPS notE, to produce cyclo-L-tryptophan-L-proline called brevianamide F. The reverse prenyltransferase notF then acts as a deoxybrevianamide E synthase and converts brevianamide F to deoxybrevianamide E via reverse prenylation at C-2 of the indole ring leading to the bicyclo[2.2.2]diazaoctane core. Deoxybrevianamide E is further hydroxylated at C-6 of the indole ring, likely catalyzed by the cytochrome P450 monooxygenase notG, to yield 6-hydroxy-deoxybrevianamide E. 6-hydroxy-deoxybrevianamide E is a specific substrate of the prenyltransferase notC for normal prenylation at C-7 to produce 6-hydroxy-7-prenyl-deoxybrevianamide, also called notoamide S. As the proposed pivotal branching point in notoamide biosynthesis, notoamide S can be diverted to notoamide E through an oxidative pyran ring closure putatively catalyzed by either notH cytochrome P450 monooxygenase or the notD FAD-linked oxidoreductase. This step would be followed by an indole 2,3-epoxidation-initiated pinacol-like rearrangement catalyzed by the notB FAD-dependent monooxygenase leading to the formation of notoamide C and notoamide D. On the other hand notoamide S is converted to notoamide T by notH (or notD), a bifunctional oxidase that also functions as the intramolecular Diels-Alderase responsible for generation of (+)-notoamide T. To generate antipodal (-)-notoaminide T, notH' (or notD') in Aspergillus versicolor is expected to catalyze a Diels-Alder reaction leading to the opposite stereochemistry. The remaining oxidoreductase notD (or notH) likely catalyzes the oxidative pyran ring formation to yield (+)-stephacidin A. The FAD-dependent monooxygenase notI is highly similar to notB and is predicted to catalyze a similar conversion from (+)-stephacidin A to (-)-notoamide B via the 2,3-epoxidation of (+)-stephacidin A followed by a pinacol-type rearrangement. Finally, it remains unclear which enzyme could be responsible for the final hydroxylation steps leading to notoamide A and sclerotiamide. This is FAD-dependent monooxygenase notI from Aspergillus sp. (strain MF297-2).